The following is a 189-amino-acid chain: Pyridoxal 5'-phosphate synthase subunit PdxT (189 aa).

Position 47 to 49 (47 to 49 (GES)) interacts with L-glutamine. The active-site Nucleophile is Cys-79. Residues Arg-106 and 135 to 136 (IR) contribute to the L-glutamine site. Catalysis depends on charge relay system residues His-171 and Glu-173.

This sequence belongs to the glutaminase PdxT/SNO family. As to quaternary structure, in the presence of PdxS, forms a dodecamer of heterodimers. Only shows activity in the heterodimer.

The catalysed reaction is aldehydo-D-ribose 5-phosphate + D-glyceraldehyde 3-phosphate + L-glutamine = pyridoxal 5'-phosphate + L-glutamate + phosphate + 3 H2O + H(+). It catalyses the reaction L-glutamine + H2O = L-glutamate + NH4(+). Its pathway is cofactor biosynthesis; pyridoxal 5'-phosphate biosynthesis. Functionally, catalyzes the hydrolysis of glutamine to glutamate and ammonia as part of the biosynthesis of pyridoxal 5'-phosphate. The resulting ammonia molecule is channeled to the active site of PdxS. In Thermoanaerobacter pseudethanolicus (strain ATCC 33223 / 39E) (Clostridium thermohydrosulfuricum), this protein is Pyridoxal 5'-phosphate synthase subunit PdxT.